A 570-amino-acid polypeptide reads, in one-letter code: Dihydroxy-acid dehydratase 2 (570 aa).

A [2Fe-2S] cluster-binding site is contributed by Cys-51. Residue Asp-83 participates in Mg(2+) binding. A [2Fe-2S] cluster-binding site is contributed by Cys-124. Mg(2+) is bound by residues Asp-125 and Lys-126. Lys-126 bears the N6-carboxylysine mark. Residue Cys-196 participates in [2Fe-2S] cluster binding. Residue Glu-446 participates in Mg(2+) binding. Ser-472 (proton acceptor) is an active-site residue.

It belongs to the IlvD/Edd family. Homodimer. The cofactor is [2Fe-2S] cluster. Mg(2+) serves as cofactor.

It carries out the reaction (2R)-2,3-dihydroxy-3-methylbutanoate = 3-methyl-2-oxobutanoate + H2O. The enzyme catalyses (2R,3R)-2,3-dihydroxy-3-methylpentanoate = (S)-3-methyl-2-oxopentanoate + H2O. It participates in amino-acid biosynthesis; L-isoleucine biosynthesis; L-isoleucine from 2-oxobutanoate: step 3/4. The protein operates within amino-acid biosynthesis; L-valine biosynthesis; L-valine from pyruvate: step 3/4. Functionally, functions in the biosynthesis of branched-chain amino acids. Catalyzes the dehydration of (2R,3R)-2,3-dihydroxy-3-methylpentanoate (2,3-dihydroxy-3-methylvalerate) into 2-oxo-3-methylpentanoate (2-oxo-3-methylvalerate) and of (2R)-2,3-dihydroxy-3-methylbutanoate (2,3-dihydroxyisovalerate) into 2-oxo-3-methylbutanoate (2-oxoisovalerate), the penultimate precursor to L-isoleucine and L-valine, respectively. The protein is Dihydroxy-acid dehydratase 2 of Bordetella bronchiseptica (strain ATCC BAA-588 / NCTC 13252 / RB50) (Alcaligenes bronchisepticus).